A 388-amino-acid polypeptide reads, in one-letter code: 8-amino-7-oxononanoate synthase (388 aa).

Arg-20 contributes to the substrate binding site. Residue 107–108 (GY) coordinates pyridoxal 5'-phosphate. His-132 contacts substrate. Pyridoxal 5'-phosphate contacts are provided by Ser-178, His-206, and Thr-237. Lys-240 is modified (N6-(pyridoxal phosphate)lysine). Thr-356 contacts substrate.

This sequence belongs to the class-II pyridoxal-phosphate-dependent aminotransferase family. BioF subfamily. Homodimer. The cofactor is pyridoxal 5'-phosphate.

The enzyme catalyses 6-carboxyhexanoyl-[ACP] + L-alanine + H(+) = (8S)-8-amino-7-oxononanoate + holo-[ACP] + CO2. It functions in the pathway cofactor biosynthesis; biotin biosynthesis. Catalyzes the decarboxylative condensation of pimeloyl-[acyl-carrier protein] and L-alanine to produce 8-amino-7-oxononanoate (AON), [acyl-carrier protein], and carbon dioxide. The sequence is that of 8-amino-7-oxononanoate synthase from Herminiimonas arsenicoxydans.